We begin with the raw amino-acid sequence, 223 residues long: Oxaloacetate tautomerase FAHD1, mitochondrial (223 aa).

Residues 1–30 (MATSMIQRMFKQGTKIVCVGRNYAAHAKEL) constitute a mitochondrion transit peptide. 3 residues coordinate Mg(2+): Glu67, Glu69, and Asp98.

The protein belongs to the FAH family. Requires Mg(2+) as cofactor. The cofactor is Mn(2+).

Its subcellular location is the mitochondrion. It catalyses the reaction oxaloacetate = enol-oxaloacetate. Tautomerase that converts enol-oxaloacetate, a strong inhibitor of succinate dehydrogenase, to the physiological keto form of oxaloacetate. The protein is Oxaloacetate tautomerase FAHD1, mitochondrial of Arabidopsis thaliana (Mouse-ear cress).